A 439-amino-acid polypeptide reads, in one-letter code: Chromosomal replication initiator protein DnaA (439 aa).

The tract at residues 1–72 (MEQFSAFKLL…SKLYDDIRAV (72 aa)) is domain I, interacts with DnaA modulators. Residues 72 to 99 (VRFVNEQDFFINLAKLEEDNRETLYQSS) are domain II. Positions 100-322 (GLSKNFTFKN…GIATKLLFYV (223 aa)) are domain III, AAA+ region. Gly144, Gly146, Lys147, and Thr148 together coordinate ATP. Positions 323–439 (KTTKQNLINN…LQDIITSLVI (117 aa)) are domain IV, binds dsDNA.

The protein belongs to the DnaA family. As to quaternary structure, oligomerizes as a right-handed, spiral filament on DNA at oriC.

The protein resides in the cytoplasm. Plays an essential role in the initiation and regulation of chromosomal replication. ATP-DnaA binds to the origin of replication (oriC) to initiate formation of the DNA replication initiation complex once per cell cycle. Binds the DnaA box (a 9 base pair repeat at the origin) and separates the double-stranded (ds)DNA. Forms a right-handed helical filament on oriC DNA; dsDNA binds to the exterior of the filament while single-stranded (ss)DNA is stabiized in the filament's interior. The ATP-DnaA-oriC complex binds and stabilizes one strand of the AT-rich DNA unwinding element (DUE), permitting loading of DNA polymerase. After initiation quickly degrades to an ADP-DnaA complex that is not apt for DNA replication. Binds acidic phospholipids. The polypeptide is Chromosomal replication initiator protein DnaA (Mycoplasma pneumoniae (strain ATCC 29342 / M129 / Subtype 1) (Mycoplasmoides pneumoniae)).